We begin with the raw amino-acid sequence, 494 residues long: Poly(3-hydroxybutyrate) depolymerase (494 aa).

The signal sequence occupies residues 1–25; that stretch reads MAFNFIRAAAAGAAMALCGVGSVHA. S45 acts as the Nucleophile in catalysis. Active-site charge relay system residues include D132 and H166. A Fibronectin type-III domain is found at 347 to 431; sequence APTGVSTSGA…AAASGTTLAA (85 aa).

Belongs to the AB hydrolase superfamily. Lipase family.

The protein resides in the secreted. The enzyme catalyses [(3R)-hydroxybutanoate](n) + H2O = [(3R)-hydroxybutanoate](n-2) + (3R)-hydroxybutanoate dimer + H(+). It catalyses the reaction [(3R)-hydroxybutanoate](n) + H2O = [(3R)-hydroxybutanoate](n-1) + (R)-3-hydroxybutanoate + H(+). The catalysed reaction is (3R)-hydroxybutanoate dimer + H2O = 2 (R)-3-hydroxybutanoate + H(+). Its function is as follows. Catalyzes the hydrolysis of poly(3-hydroxybutyrate) (PHB) film, producing the monomer and dimer of 3-hydroxybutyrate (3HB), while the 3HB trimer and tetramer are not formed. The protein is Poly(3-hydroxybutyrate) depolymerase of Delftia acidovorans (Pseudomonas acidovorans).